A 904-amino-acid polypeptide reads, in one-letter code: Protein translocase subunit SecA (904 aa).

Residues Gln89, 107–111 (GEGKT), and Asp502 contribute to the ATP site. Zn(2+)-binding residues include Cys886, Cys888, Cys897, and His898.

This sequence belongs to the SecA family. Monomer and homodimer. Part of the essential Sec protein translocation apparatus which comprises SecA, SecYEG and auxiliary proteins SecDF-YajC and YidC. It depends on Zn(2+) as a cofactor.

It is found in the cell inner membrane. It localises to the cytoplasm. The enzyme catalyses ATP + H2O + cellular proteinSide 1 = ADP + phosphate + cellular proteinSide 2.. Part of the Sec protein translocase complex. Interacts with the SecYEG preprotein conducting channel. Has a central role in coupling the hydrolysis of ATP to the transfer of proteins into and across the cell membrane, serving both as a receptor for the preprotein-SecB complex and as an ATP-driven molecular motor driving the stepwise translocation of polypeptide chains across the membrane. In Rhizobium etli (strain CIAT 652), this protein is Protein translocase subunit SecA.